A 736-amino-acid chain; its full sequence is MAEGNSDYDHRAMKLQRNLRHCEGKRLELERELFQHSSSDAHICHLKYMKLKNSLKEVCERGKKAHLRNQAFLQEFDLIEARLFGLISNANALQKKKMQLKSHPPEMNKGPNMSRSTYHPATIFMGRQMSASSSIEHCLTQRKSPQPTKSFSISDPHSVRQAAMNRNVTDSCVVPANSDIQCLNKPDKIDGNTSFQLSQKMPVTSVASSEDGRTHRAQIDKSQSGRKHLVESKQSAQLSTQILERLSPENRARDLQNDSPGNMVEKSLMYERLVPNEESFTHANPSGASPDACDYINNQTSDKHSARENLSETIESHLIPEEEDKQCLDSSSDLTVSISESEDDSYPPCEVNRIEVNQNDEKNLYTALPKQETVILKNYEQSSVIQPLQTSEVNSCDESSSASTISQSNLSDEGFFHLLQSIERMVLLREQGGMELYQRAGINQKQLLRLISVCNRMGALRVEDLEACCALVLCKTQELLKSTFVGYSHEATAGIHNTDESKERFLSRKCQERLLGHIAFLNKHHILNEKVLPECFTSVMMLSDGQNSCKSVENVENSTEDGNVPQVSSTMKDDPLTIKPRQIVQELYKTTGSSHQEFETQVHPGVVLQSANISVESNTQAEEENDEDEISDLSEIYIPGLTVEEGNATTKASKKQISETSFSSSEKSPISRKEDKNIQPNYMKSNNMSTGNKFSKVVTTVKSKAFWGESEDSSSEIEAMLRPKTESVDDFDDFFD.

Positions 10–35 (HRAMKLQRNLRHCEGKRLELERELFQ) form a coiled coil. The span at 192 to 208 (NTSFQLSQKMPVTSVAS) shows a compositional bias: polar residues. Disordered stretches follow at residues 192–238 (NTSF…SAQL), 279–305 (SFTH…DKHS), 323–348 (EDKQ…SYPP), and 642–690 (TVEE…NMST). A compositionally biased stretch (basic and acidic residues) spans 210–219 (EDGRTHRAQI). Residues 328–339 (LDSSSDLTVSIS) show a composition bias toward polar residues. Positions 658–668 (SETSFSSSEKS) are enriched in low complexity. A compositionally biased stretch (polar residues) spans 678-690 (IQPNYMKSNNMST).

This sequence belongs to the kizuna family.

It is found in the cytoplasm. The protein localises to the cytoskeleton. It localises to the microtubule organizing center. Its subcellular location is the centrosome. The protein resides in the cilium basal body. Functionally, centrosomal protein required for establishing a robust mitotic centrosome architecture that can endure the forces that converge on the centrosomes during spindle formation. Required for stabilizing the expanded pericentriolar material around the centriole. The protein is Centrosomal protein kizuna (kiz) of Xenopus laevis (African clawed frog).